Reading from the N-terminus, the 377-residue chain is Palmitoyltransferase ZDHHC16 (377 aa).

The Cytoplasmic segment spans residues 1 to 77; the sequence is MRGQRSLLLG…VYWLVDNVIR (77 aa). A helical membrane pass occupies residues 78-98; the sequence is WFGVVFVVLVIVLTGSIVAIA. Residues 99–116 lie on the Lumenal side of the membrane; it reads YLCVLPLILRTYSVPRLC. A helical membrane pass occupies residues 117 to 137; the sequence is WHFFYSHWNLILIVFHYYQAI. Residues 138–198 lie on the Cytoplasmic side of the membrane; the sequence is TTPPGYPPQG…NNCVGHYNHR (61 aa). The 51-residue stretch at 155–205 folds into the DHHC domain; it reads SICKKCIYPKPARTHHCSICNRCVLKMDHHCPWLNNCVGHYNHRYFFSFCF. The active-site S-palmitoyl cysteine intermediate is the C185. A helical membrane pass occupies residues 199 to 219; sequence YFFSFCFFMTLGCVYCSYGSW. Over 220-266 the chain is Lumenal; it reads DLFREAYAAIEKMKQLDKNKLQAVANQTYHQTPPPTFSFRERMTHKS. A helical membrane pass occupies residues 267 to 287; it reads LVYLWFLCSSVALALGALTVW. The Cytoplasmic portion of the chain corresponds to 288–377; that stretch reads HAVLISRGET…TAHSASVMAV (90 aa).

Belongs to the DHHC palmitoyltransferase family. Interacts with ABL1. Interacts with COPS5/JAB1. In terms of tissue distribution, widely expressed.

It is found in the endoplasmic reticulum membrane. The catalysed reaction is L-cysteinyl-[protein] + hexadecanoyl-CoA = S-hexadecanoyl-L-cysteinyl-[protein] + CoA. Functionally, palmitoyl acyltransferase that mediates palmitoylation of proteins such as PLN and ZDHHC6. Required during embryonic heart development and cardiac function, possibly by mediating palmitoylation of PLN, thereby affecting PLN phosphorylation and homooligomerization. Also required for eye development. Palmitoylates ZDHHC6, affecting the quaternary assembly of ZDHHC6, its localization, stability and function. May play a role in DNA damage response. May be involved in apoptosis regulation. Involved in the proliferation of neural stem cells by regulating the FGF/ERK pathway. This chain is Palmitoyltransferase ZDHHC16, found in Homo sapiens (Human).